Reading from the N-terminus, the 500-residue chain is UDP-N-acetylmuramoyl-L-alanyl-D-glutamate--2,6-diaminopimelate ligase (500 aa).

Serine 32 is a binding site for UDP-N-acetyl-alpha-D-muramoyl-L-alanyl-D-glutamate. 117–123 is an ATP binding site; the sequence is GTNGKTT. UDP-N-acetyl-alpha-D-muramoyl-L-alanyl-D-glutamate is bound by residues 159–160, serine 186, glutamine 192, and arginine 194; that span reads TT. Lysine 226 carries the N6-carboxylysine modification. Meso-2,6-diaminopimelate contacts are provided by residues arginine 395, 419 to 422, glycine 470, and glutamate 474; that span reads DNPR. The short motif at 419–422 is the Meso-diaminopimelate recognition motif element; sequence DNPR.

Belongs to the MurCDEF family. MurE subfamily. Mg(2+) serves as cofactor. Post-translationally, carboxylation is probably crucial for Mg(2+) binding and, consequently, for the gamma-phosphate positioning of ATP.

It localises to the cytoplasm. The enzyme catalyses UDP-N-acetyl-alpha-D-muramoyl-L-alanyl-D-glutamate + meso-2,6-diaminopimelate + ATP = UDP-N-acetyl-alpha-D-muramoyl-L-alanyl-gamma-D-glutamyl-meso-2,6-diaminopimelate + ADP + phosphate + H(+). It functions in the pathway cell wall biogenesis; peptidoglycan biosynthesis. Functionally, catalyzes the addition of meso-diaminopimelic acid to the nucleotide precursor UDP-N-acetylmuramoyl-L-alanyl-D-glutamate (UMAG) in the biosynthesis of bacterial cell-wall peptidoglycan. This Parasynechococcus marenigrum (strain WH8102) protein is UDP-N-acetylmuramoyl-L-alanyl-D-glutamate--2,6-diaminopimelate ligase.